A 379-amino-acid polypeptide reads, in one-letter code: UDP-4-amino-4-deoxy-L-arabinose--oxoglutarate aminotransferase (379 aa).

Lysine 182 carries the post-translational modification N6-(pyridoxal phosphate)lysine.

The protein belongs to the DegT/DnrJ/EryC1 family. ArnB subfamily. Homodimer. The cofactor is pyridoxal 5'-phosphate.

It carries out the reaction UDP-4-amino-4-deoxy-beta-L-arabinose + 2-oxoglutarate = UDP-beta-L-threo-pentopyranos-4-ulose + L-glutamate. The protein operates within nucleotide-sugar biosynthesis; UDP-4-deoxy-4-formamido-beta-L-arabinose biosynthesis; UDP-4-deoxy-4-formamido-beta-L-arabinose from UDP-alpha-D-glucuronate: step 2/3. It participates in bacterial outer membrane biogenesis; lipopolysaccharide biosynthesis. Its function is as follows. Catalyzes the conversion of UDP-4-keto-arabinose (UDP-Ara4O) to UDP-4-amino-4-deoxy-L-arabinose (UDP-L-Ara4N). The modified arabinose is attached to lipid A and is required for resistance to polymyxin and cationic antimicrobial peptides. In Sodalis glossinidius (strain morsitans), this protein is UDP-4-amino-4-deoxy-L-arabinose--oxoglutarate aminotransferase.